Here is a 427-residue protein sequence, read N- to C-terminus: Endothelin-1 receptor (427 aa).

The first 20 residues, 1–20 (METFWLRLSFWVALVGGVIS), serve as a signal peptide directing secretion. Over 21-80 (DNPESYSTNLSIHVDSVATFHGTELSFVVTTHQPTNLALPSNGSMHNYCPQQTKITSAFK) the chain is Extracellular. 2 N-linked (GlcNAc...) asparagine glycosylation sites follow: asparagine 29 and asparagine 62. Residues 81–102 (YINTVISCTIFIVGMVGNATLL) traverse the membrane as a helical segment. The Cytoplasmic portion of the chain corresponds to 103–112 (RIIYQNKCMR). The helical transmembrane segment at 113–132 (NGPNALIASLALGDLIYVVI) threads the bilayer. The Extracellular portion of the chain corresponds to 133 to 159 (DLPINVFKLLAGRWPFEQNDFGVFLCK). Cysteine 158 and cysteine 239 form a disulfide bridge. A helical membrane pass occupies residues 160 to 181 (LFPFLQKSSVGITVLNLCALSV). Over 182 to 205 (DRYRAVASWSRVQGIGIPLVTAIE) the chain is Cytoplasmic. The chain crosses the membrane as a helical span at residues 206–229 (IVSIWILSFILAIPEAIGFVMVPF). Residues 230 to 256 (EYKGAQHRTCMLNATSKFMEFYQDVKD) lie on the Extracellular side of the membrane. The chain crosses the membrane as a helical span at residues 257-278 (WWLFGFYFCMPLVCTAIFYTLM). The Cytoplasmic segment spans residues 279-306 (TCEMLNRRNGSLRIALSEHLKQRREVAK). A helical transmembrane segment spans residues 307–328 (TVFCLVVIFALCWFPLHLSRIL). At 329–347 (KKTVYDEMDTNRCELLSFL) the chain is on the extracellular side. A helical membrane pass occupies residues 348-372 (LLMDYIGINLATMNSCINPIALYFV). Topologically, residues 373–427 (SKKFKNCFQSCLCCCCYQSKSLMTSVPMNGTSIQWKNHEQNNHNTERSSHKDSIN) are cytoplasmic. Phosphoserine is present on serine 425.

The protein belongs to the G-protein coupled receptor 1 family. Endothelin receptor subfamily. EDNRA sub-subfamily. As to quaternary structure, interacts with HDAC7 and KAT5.

It is found in the cell membrane. Receptor for endothelin-1. Mediates its action by association with G proteins that activate a phosphatidylinositol-calcium second messenger system. The rank order of binding affinities for ET-A is: ET1 &gt; ET2 &gt;&gt; ET3. The sequence is that of Endothelin-1 receptor from Bos taurus (Bovine).